We begin with the raw amino-acid sequence, 478 residues long: MARKTLRARRFFSLIFPFFFITSVYAEQTPESAKTVTVEAKNEMFAPQHPDQYQSWKATSEQSAREDALAEDPRLVILWAGYPFSRDYNKPRGHAYAVTDVRETLRTGAPKTAEDGPLPMACWSCKSPDVARLIQQEGEDGYFHGKWARGGPEIVNDLGCADCHNTASDDFAQGKPALTLSRPYAERAMEAIGKPFDKAGRFDQQSMVCGQCHVEYYFDGKNKAVKFPWDEGMKVENMEQYYDAIAFSDWTNSLSKTPMLKAQHPEYETWSAGIHGKNNVTCIDCHMPKVQNAEGKLYTDHKIGNPFDNFAQTCANCHTQDKASLQKVVAERKQAIHDLKIKVEDQLVHAHFEAKAAWDAGATDAEMKPILNDIRHAQWRWDLAIASHGIHMHAPEEGLRMLGSAMDKAADARTKLARLLATKGITHEIPLPDISTKEKAQKAIGLNMQQINAEKQDFLKTVVPQWEDQARKNGLLSQ.

Positions 1-26 (MARKTLRARRFFSLIFPFFFITSVYA) are cleaved as a signal peptide. Residue histidine 94 participates in heme c binding. Residues cysteine 122, cysteine 125, and lysine 126 each coordinate heme. Heme c-binding residues include cysteine 160, cysteine 163, histidine 164, cysteine 209, cysteine 212, and histidine 213. Glutamate 215, tyrosine 216, lysine 261, and glutamine 263 together coordinate Ca(2+). Tyrosine 216 serves as a coordination point for substrate. Histidine 264 lines the substrate pocket. Positions 275, 282, 285, 286, 301, 314, 317, 318, and 393 each coordinate heme c.

The protein belongs to the cytochrome c-552 family. Requires Ca(2+) as cofactor. Heme c serves as cofactor.

The protein resides in the periplasm. It carries out the reaction 6 Fe(III)-[cytochrome c] + NH4(+) + 2 H2O = 6 Fe(II)-[cytochrome c] + nitrite + 8 H(+). It functions in the pathway nitrogen metabolism; nitrate reduction (assimilation). Catalyzes the reduction of nitrite to ammonia, consuming six electrons in the process. This is Cytochrome c-552 from Salmonella gallinarum (strain 287/91 / NCTC 13346).